Consider the following 191-residue polypeptide: MRGVVGVLALQGDFREHKEALKRLGIEAKEVRKKEHLEGLKALIVPGGESTTIGKLAREYGIEDEVRKRVEEGSLALFGTCAGAIWLAKEIVGYPEQPRLGVLEAWVERNAFGRQVESFEEDLEVEGLGSFHGVFIRAPVFRRLGEGVEVLARLGDLPVLVRQGKVLASSFHPELTEDPRLHRYFLELAGV.

L-glutamine is bound at residue 48-50; the sequence is GES. Catalysis depends on C81, which acts as the Nucleophile. L-glutamine-binding positions include R109 and 136-137; that span reads IR. Active-site charge relay system residues include H172 and E174.

The protein belongs to the glutaminase PdxT/SNO family. In the presence of PdxS, forms a dodecamer of heterodimers. Only shows activity in the heterodimer.

The catalysed reaction is aldehydo-D-ribose 5-phosphate + D-glyceraldehyde 3-phosphate + L-glutamine = pyridoxal 5'-phosphate + L-glutamate + phosphate + 3 H2O + H(+). It catalyses the reaction L-glutamine + H2O = L-glutamate + NH4(+). It functions in the pathway cofactor biosynthesis; pyridoxal 5'-phosphate biosynthesis. In terms of biological role, catalyzes the hydrolysis of glutamine to glutamate and ammonia as part of the biosynthesis of pyridoxal 5'-phosphate. The resulting ammonia molecule is channeled to the active site of PdxS. In Thermus thermophilus (strain ATCC 27634 / DSM 579 / HB8), this protein is Pyridoxal 5'-phosphate synthase subunit PdxT.